The sequence spans 996 residues: GPI ethanolamine phosphate transferase 1 (996 aa).

Topologically, residues 1 to 8 are cytoplasmic; it reads MAAFPRFR. Residues 9-29 traverse the membrane as a helical segment; that stretch reads FLAIAVIFHFAYIFSIFDIYF. The Lumenal portion of the chain corresponds to 30–463; sequence VSPIETGMRL…LQTYDWLFLR (434 aa). N-linked (GlcNAc...) asparagine glycans are attached at residues Asn47, Asn147, and Asn210. The chain crosses the membrane as a helical span at residues 464 to 484; sequence ALITIGYLGWIAYALTTVVDL. The Cytoplasmic portion of the chain corresponds to 485 to 495; sequence HVLHGRVRPSR. Residues 496–516 form a helical membrane-spanning segment; the sequence is TLGGGLFFTSVLVALYASLVI. Residues 517 to 518 are Lumenal-facing; that stretch reads SK. The chain crosses the membrane as a helical span at residues 519–539; that stretch reads SPLTYYVYAFFPVFFWEEVYA. The Cytoplasmic portion of the chain corresponds to 540-560; the sequence is HRESLAAGRKELLGHINSGGS. Residues 561-581 traverse the membrane as a helical segment; it reads VASFVLNSALYVGVIESLALG. Residues 582 to 586 lie on the Lumenal side of the membrane; sequence YIHRE. The chain crosses the membrane as a helical span at residues 587–607; it reads ILSVLFVLGSFWPFTHGLSFL. At 608 to 612 the chain is on the cytoplasmic side; sequence KKHGA. Residues 613 to 633 form a helical membrane-spanning segment; that stretch reads LSATWFLACIAMSTFTLLPAM. The Lumenal segment spans residues 634-637; sequence KAEN. A helical transmembrane segment spans residues 638–658; it reads VNLITIGGVLMVVIGLLYLIF. The Cytoplasmic portion of the chain corresponds to 659-681; that stretch reads EDFVLADFSWNAKPTSRNHLSRS. A helical transmembrane segment spans residues 682–702; it reads LVGIQVGLTVLSIIITRSSAL. Residues 703–715 are Lumenal-facing; that stretch reads SLQAKQGLPRGNQ. Residues 716-734 form a helical membrane-spanning segment; it reads IMGWVTLVASLLMPLAYRL. At 735-754 the chain is on the cytoplasmic side; it reads RPNNHYMHRILVIFLTCAPT. The chain crosses the membrane as a helical span at residues 755–775; the sequence is FVILTISYEGLFYLVFSALLV. Over 776 to 822 the chain is Lumenal; it reads SWVRLEHAVQKFTSSKAPQTAATKKPTTTTESHLPAPFRPLTLHDAR. Residues 823–843 form a helical membrane-spanning segment; sequence VALFFFILLQSAFFSTGNVAS. Residues 844-865 lie on the Cytoplasmic side of the membrane; that stretch reads VSSFSLDSVYRLIPIFDPFSQG. The helical transmembrane segment at 866-886 threads the bilayer; that stretch reads AMLILKLMIPFALISANLGIL. Residues 887–895 lie on the Lumenal side of the membrane; it reads NKRLGVAPS. The chain crosses the membrane as a helical span at residues 896–916; it reads ALFMVVMGISDILTLYFFWVV. The Cytoplasmic segment spans residues 917–932; it reads KDEGSWLEIGSTISHF. The chain crosses the membrane as a helical span at residues 933-953; it reads VIASLLCVFVSALEPVSAAFI. Residues 954–996 lie on the Lumenal side of the membrane; it reads AGVEVGEESELKEEGKVAEKVVEKVNEAVEGLVSGGDGGGDES.

Belongs to the PIGG/PIGN/PIGO family. PIGN subfamily.

It localises to the endoplasmic reticulum membrane. It participates in glycolipid biosynthesis; glycosylphosphatidylinositol-anchor biosynthesis. Its function is as follows. Ethanolamine phosphate transferase involved in glycosylphosphatidylinositol-anchor biosynthesis. Transfers ethanolamine phosphate to the first alpha-1,4-linked mannose of the glycosylphosphatidylinositol precursor of GPI-anchor. This chain is GPI ethanolamine phosphate transferase 1 (mcd-4), found in Neurospora crassa (strain ATCC 24698 / 74-OR23-1A / CBS 708.71 / DSM 1257 / FGSC 987).